The primary structure comprises 179 residues: Replication restart protein DnaT (179 aa).

Positions 156-179 are disordered; sequence GGLPKRDVNTVSEPDSQIPPGFRG.

This sequence belongs to the DnaT family. As to quaternary structure, homooligomerizes. Interacts with PriB. Component of the replication restart primosome. Primosome assembly occurs via a 'hand-off' mechanism. PriA binds to replication forks, subsequently PriB then DnaT bind; DnaT then displaces ssDNA to generate the helicase loading substrate.

In terms of biological role, involved in the restart of stalled replication forks, which reloads the replicative helicase on sites other than the origin of replication. Can function in multiple replication restart pathways. Displaces ssDNA from a PriB-ssDNA complex. Probably forms a spiral filament on ssDNA. The polypeptide is Replication restart protein DnaT (Shigella boydii serotype 18 (strain CDC 3083-94 / BS512)).